Consider the following 179-residue polypeptide: Phospholipase A2 (179 aa).

Positions 1–21 are cleaved as a signal peptide; it reads MHALRSSVLALWLCLHVSVRA. The propeptide occupies 22–39; that stretch reads WMTYRSANGLDEYEPEDR. Tryptophan 47, glycine 49, and glycine 51 together coordinate Ca(2+). Intrachain disulfides connect cysteine 48-cysteine 70, cysteine 69-cysteine 109, cysteine 76-cysteine 102, cysteine 100-cysteine 133, and cysteine 142-cysteine 150. Histidine 73 is a catalytic residue. Aspartate 74 contacts Ca(2+). Residue aspartate 103 is part of the active site.

It belongs to the phospholipase A2 family. Group III subfamily. The cofactor is Ca(2+). As to expression, expressed by the venom gland.

Its subcellular location is the secreted. The enzyme catalyses a 1,2-diacyl-sn-glycero-3-phosphocholine + H2O = a 1-acyl-sn-glycero-3-phosphocholine + a fatty acid + H(+). In terms of biological role, may potentiate Xylotoxin(1)-Xa1a DRG activation and cell lysis, since the orthologous A.mellifera PA2 potentiates Xylotoxin(1)-Xa1a DRG activation and cell lysis. In vivo, intraplantar injection in mice may potentiate spontaneous pain behaviors and paw swelling caused by Xylotoxin(1)-Xa1a, since the orthologous A.mellifera PA2 shows this effect. PLA2 catalyzes the calcium-dependent hydrolysis of the 2-acyl groups in 3-sn-phosphoglycerides. The polypeptide is Phospholipase A2 (Xylocopa aruana (Great carpenter bee)).